Here is a 292-residue protein sequence, read N- to C-terminus: Seed lectin (292 aa).

Residues Met-1–Ser-37 form the signal peptide. N-linked (GlcNAc...) asparagine glycans are attached at residues Asn-82 and Asn-154. Residues Asp-163 and Asp-165 each coordinate Mn(2+). The Ca(2+) site is built by Asp-165, His-167, Asn-169, and Asp-172. Mn(2+) contacts are provided by Asp-172 and His-177. An N-linked (GlcNAc...) asparagine glycan is attached at Asn-186.

It belongs to the leguminous lectin family.

Functionally, mannose/glucose-specific lectin. In Styphnolobium japonicum (Japanese pagoda tree), this protein is Seed lectin.